We begin with the raw amino-acid sequence, 139 residues long: Protein shisa-5 (139 aa).

Residues Phe3–Leu23 form a helical membrane-spanning segment.

Belongs to the shisa family.

The protein localises to the endoplasmic reticulum membrane. The protein resides in the nucleus membrane. Its function is as follows. Can induce apoptosis in a caspase-dependent manner and plays a role in p53/TP53-dependent apoptosis. The polypeptide is Protein shisa-5 (Shisa5) (Gallus gallus (Chicken)).